The sequence spans 112 residues: T cell receptor alpha variable 13-1 (112 aa).

The signal sequence occupies residues 1–20 (MTSIRAVFIFLWLQLDLVNG). The 92-residue stretch at 21–112 (ENVEQHPSTL…DSAVYFCAAS (92 aa)) folds into the Ig-like domain. Cys42 and Cys109 are oxidised to a cystine. Residue Asn86 is glycosylated (N-linked (GlcNAc...) asparagine).

Alpha-beta TR is a heterodimer composed of an alpha and beta chain; disulfide-linked. The alpha-beta TR is associated with the transmembrane signaling CD3 coreceptor proteins to form the TR-CD3 (TcR or TCR). The assembly of alpha-beta TR heterodimers with CD3 occurs in the endoplasmic reticulum where a single alpha-beta TR heterodimer associates with one CD3D-CD3E heterodimer, one CD3G-CD3E heterodimer and one CD247 homodimer forming a stable octameric structure. CD3D-CD3E and CD3G-CD3E heterodimers preferentially associate with TR alpha and TR beta chains, respectively. The association of the CD247 homodimer is the last step of TcR assembly in the endoplasmic reticulum and is required for transport to the cell surface.

Its subcellular location is the cell membrane. V region of the variable domain of T cell receptor (TR) alpha chain that participates in the antigen recognition. Alpha-beta T cell receptors are antigen specific receptors which are essential to the immune response and are present on the cell surface of T lymphocytes. Recognize peptide-major histocompatibility (MH) (pMH) complexes that are displayed by antigen presenting cells (APC), a prerequisite for efficient T cell adaptive immunity against pathogens. Binding of alpha-beta TR to pMH complex initiates TR-CD3 clustering on the cell surface and intracellular activation of LCK that phosphorylates the ITAM motifs of CD3G, CD3D, CD3E and CD247 enabling the recruitment of ZAP70. In turn ZAP70 phosphorylates LAT, which recruits numerous signaling molecules to form the LAT signalosome. The LAT signalosome propagates signal branching to three major signaling pathways, the calcium, the mitogen-activated protein kinase (MAPK) kinase and the nuclear factor NF-kappa-B (NF-kB) pathways, leading to the mobilization of transcription factors that are critical for gene expression and essential for T cell growth and differentiation. The T cell repertoire is generated in the thymus, by V-(D)-J rearrangement. This repertoire is then shaped by intrathymic selection events to generate a peripheral T cell pool of self-MH restricted, non-autoaggressive T cells. Post-thymic interaction of alpha-beta TR with the pMH complexes shapes TR structural and functional avidity. In Homo sapiens (Human), this protein is T cell receptor alpha variable 13-1.